Reading from the N-terminus, the 320-residue chain is 4-hydroxy-3-methylbut-2-enyl diphosphate reductase (320 aa).

Cys-12 contacts [4Fe-4S] cluster. (2E)-4-hydroxy-3-methylbut-2-enyl diphosphate is bound by residues His-41 and His-74. 2 residues coordinate dimethylallyl diphosphate: His-41 and His-74. The isopentenyl diphosphate site is built by His-41 and His-74. [4Fe-4S] cluster is bound at residue Cys-96. His-124 is a binding site for (2E)-4-hydroxy-3-methylbut-2-enyl diphosphate. His-124 is a dimethylallyl diphosphate binding site. Isopentenyl diphosphate is bound at residue His-124. The active-site Proton donor is Glu-126. Thr-167 contacts (2E)-4-hydroxy-3-methylbut-2-enyl diphosphate. Cys-197 is a binding site for [4Fe-4S] cluster. The (2E)-4-hydroxy-3-methylbut-2-enyl diphosphate site is built by Ser-225, Ser-226, Asn-227, and Ser-269. The dimethylallyl diphosphate site is built by Ser-225, Ser-226, Asn-227, and Ser-269. Residues Ser-225, Ser-226, Asn-227, and Ser-269 each coordinate isopentenyl diphosphate.

Belongs to the IspH family. [4Fe-4S] cluster is required as a cofactor.

It carries out the reaction isopentenyl diphosphate + 2 oxidized [2Fe-2S]-[ferredoxin] + H2O = (2E)-4-hydroxy-3-methylbut-2-enyl diphosphate + 2 reduced [2Fe-2S]-[ferredoxin] + 2 H(+). The catalysed reaction is dimethylallyl diphosphate + 2 oxidized [2Fe-2S]-[ferredoxin] + H2O = (2E)-4-hydroxy-3-methylbut-2-enyl diphosphate + 2 reduced [2Fe-2S]-[ferredoxin] + 2 H(+). It participates in isoprenoid biosynthesis; dimethylallyl diphosphate biosynthesis; dimethylallyl diphosphate from (2E)-4-hydroxy-3-methylbutenyl diphosphate: step 1/1. The protein operates within isoprenoid biosynthesis; isopentenyl diphosphate biosynthesis via DXP pathway; isopentenyl diphosphate from 1-deoxy-D-xylulose 5-phosphate: step 6/6. Its function is as follows. Catalyzes the conversion of 1-hydroxy-2-methyl-2-(E)-butenyl 4-diphosphate (HMBPP) into a mixture of isopentenyl diphosphate (IPP) and dimethylallyl diphosphate (DMAPP). Acts in the terminal step of the DOXP/MEP pathway for isoprenoid precursor biosynthesis. This is 4-hydroxy-3-methylbut-2-enyl diphosphate reductase from Francisella tularensis subsp. novicida (strain U112).